The primary structure comprises 451 residues: Chromosomal replication initiator protein DnaA (451 aa).

Residues 1–72 (MQSIEDIWQE…ANILQEITGR (72 aa)) form a domain I, interacts with DnaA modulators region. The segment at 72-108 (RLFDVRFIDGEQEENFEYTVIKPNPALDEDGIEIGKH) is domain II. The domain III, AAA+ region stretch occupies residues 109 to 325 (MLNPRYVFDT…GALIRVVAYS (217 aa)). G153, G155, K156, and T157 together coordinate ATP. Residues 326–451 (SLVNKDITAG…KNLRKSQNMF (126 aa)) are domain IV, binds dsDNA.

The protein belongs to the DnaA family. Oligomerizes as a right-handed, spiral filament on DNA at oriC.

The protein localises to the cytoplasm. In terms of biological role, plays an essential role in the initiation and regulation of chromosomal replication. ATP-DnaA binds to the origin of replication (oriC) to initiate formation of the DNA replication initiation complex once per cell cycle. Binds the DnaA box (a 9 base pair repeat at the origin) and separates the double-stranded (ds)DNA. Forms a right-handed helical filament on oriC DNA; dsDNA binds to the exterior of the filament while single-stranded (ss)DNA is stabiized in the filament's interior. The ATP-DnaA-oriC complex binds and stabilizes one strand of the AT-rich DNA unwinding element (DUE), permitting loading of DNA polymerase. After initiation quickly degrades to an ADP-DnaA complex that is not apt for DNA replication. Binds acidic phospholipids. The protein is Chromosomal replication initiator protein DnaA of Listeria welshimeri serovar 6b (strain ATCC 35897 / DSM 20650 / CCUG 15529 / CIP 8149 / NCTC 11857 / SLCC 5334 / V8).